Reading from the N-terminus, the 264-residue chain is Glutamate 5-kinase (264 aa).

Residue lysine 9 participates in ATP binding. Substrate-binding residues include serine 47, aspartate 132, and asparagine 144. ATP is bound by residues serine 164–aspartate 165 and threonine 206–lysine 212.

It belongs to the glutamate 5-kinase family.

The protein resides in the cytoplasm. The enzyme catalyses L-glutamate + ATP = L-glutamyl 5-phosphate + ADP. It participates in amino-acid biosynthesis; L-proline biosynthesis; L-glutamate 5-semialdehyde from L-glutamate: step 1/2. Catalyzes the transfer of a phosphate group to glutamate to form L-glutamate 5-phosphate. In Helicobacter hepaticus (strain ATCC 51449 / 3B1), this protein is Glutamate 5-kinase.